Reading from the N-terminus, the 270-residue chain is Indole-3-glycerol phosphate synthase (270 aa).

Belongs to the TrpC family.

The catalysed reaction is 1-(2-carboxyphenylamino)-1-deoxy-D-ribulose 5-phosphate + H(+) = (1S,2R)-1-C-(indol-3-yl)glycerol 3-phosphate + CO2 + H2O. It participates in amino-acid biosynthesis; L-tryptophan biosynthesis; L-tryptophan from chorismate: step 4/5. In Beutenbergia cavernae (strain ATCC BAA-8 / DSM 12333 / CCUG 43141 / JCM 11478 / NBRC 16432 / NCIMB 13614 / HKI 0122), this protein is Indole-3-glycerol phosphate synthase.